We begin with the raw amino-acid sequence, 721 residues long: Kinesin-like protein KIF2C (721 aa).

Positions 1 to 250 (MESLHARLFP…CSPLTVTDPI (250 aa)) are globular. Phosphoserine is present on residues serine 3 and serine 19. The residue at position 92 (serine 92) is a Phosphoserine; by AURKB. The Microtubule tip localization signal signature appears at 95–98 (SKIP). Serine 106, serine 108, serine 112, serine 162, serine 171, serine 183, and serine 188 each carry phosphoserine. The tract at residues 164–188 (EAEEQAHSTRSTSSANPGNSVRRKS) is disordered. The span at 171 to 182 (STRSTSSANPGN) shows a compositional bias: polar residues. The negative regulator of microtubule-binding stretch occupies residues 203 to 234 (EKRAQNSELRIKRAQEYDSSFPNWEFARMIKE). The 331-residue stretch at 254–584 (RICVCVRKRP…LRYADRVKEL (331 aa)) folds into the Kinesin motor domain. ATP is bound by residues arginine 260 and 344–351 (GQTGSGKT). Phosphoserine occurs at positions 515 and 626. A coiled-coil region spans residues 614–652 (GNEEEELSSQMSSFNEAMTQIRELEERALEELREIIQQG).

This sequence belongs to the TRAFAC class myosin-kinesin ATPase superfamily. Kinesin family. MCAK/KIF2 subfamily. In terms of assembly, interacts with CENPH. Interacts with MTUS2/TIP150; the interaction is direct. Interacts with MAPRE1; the interaction is direct, regulated by phosphorylation and is probably required for targeting to growing microtubule plus ends. Interacts with KIF18B at microtubule tips; this interaction increases the affinity of both partners for microtubule plus ends and is required for robust microtubule depolymerization. Phosphorylation by AURKA or AURKB strongly reduces KIF18B-binding. Phosphorylation by AURKB, regulates association with centromeres and kinetochores and the microtubule depolymerization activity. Post-translationally, ubiquitinated.

Its subcellular location is the cytoplasm. The protein localises to the cytoskeleton. It localises to the nucleus. It is found in the chromosome. The protein resides in the centromere. Its subcellular location is the kinetochore. In complex with KIF18B, constitutes the major microtubule plus-end depolymerizing activity in mitotic cells. Regulates the turnover of microtubules at the kinetochore and functions in chromosome segregation during mitosis. Plays a role in chromosome congression and is required for the lateral to end-on conversion of the chromosome-microtubule attachment. This is Kinesin-like protein KIF2C (Kif2c) from Mus musculus (Mouse).